The primary structure comprises 366 residues: Class I histocompatibility antigen, Gogo-C*0202 alpha chain (366 aa).

The signal sequence occupies residues 1–24; sequence MRVMAPRTLILLLSGALALTETWA. The segment at 25-114 is alpha-1; it reads GSHSMRYFYT…LRGYYNQSED (90 aa). Over 25–308 the chain is Extracellular; it reads GSHSMRYFYT…EPSSQPTIPI (284 aa). A glycan (N-linked (GlcNAc...) asparagine) is linked at Asn-110. Residues 115-206 form an alpha-2 region; it reads GSHTLQSMYG…ENGKETLQRA (92 aa). Cystine bridges form between Cys-125/Cys-188 and Cys-227/Cys-283. An alpha-3 region spans residues 207–298; the sequence is EPPKTHVTHH…GLPEPLTLRW (92 aa). An Ig-like C1-type domain is found at 209 to 297; the sequence is PKTHVTHHPL…EGLPEPLTLR (89 aa). The connecting peptide stretch occupies residues 299–308; that stretch reads EPSSQPTIPI. The helical transmembrane segment at 309–332 threads the bilayer; sequence VGIVVGLAVLVVLAVLGAVVTAMM. Topologically, residues 333-366 are cytoplasmic; sequence CRRKSSGGKGGSCSQAACSNSAQGSDESLITCKA.

The protein belongs to the MHC class I family. In terms of assembly, heterodimer of an alpha chain and a beta chain (beta-2-microglobulin).

It is found in the membrane. Its function is as follows. Involved in the presentation of foreign antigens to the immune system. The protein is Class I histocompatibility antigen, Gogo-C*0202 alpha chain of Gorilla gorilla gorilla (Western lowland gorilla).